Here is a 219-residue protein sequence, read N- to C-terminus: 2-hydroxy-3-keto-5-methylthiopentenyl-1-phosphate phosphatase (219 aa).

The protein belongs to the HAD-like hydrolase superfamily. MtnX family.

It catalyses the reaction 2-hydroxy-5-methylsulfanyl-3-oxopent-1-enyl phosphate + H2O = 1,2-dihydroxy-5-(methylsulfanyl)pent-1-en-3-one + phosphate. The protein operates within amino-acid biosynthesis; L-methionine biosynthesis via salvage pathway; L-methionine from S-methyl-5-thio-alpha-D-ribose 1-phosphate: step 4/6. Its function is as follows. Dephosphorylates 2-hydroxy-3-keto-5-methylthiopentenyl-1-phosphate (HK-MTPenyl-1-P) yielding 1,2-dihydroxy-3-keto-5-methylthiopentene (DHK-MTPene). In Bacillus anthracis (strain A0248), this protein is 2-hydroxy-3-keto-5-methylthiopentenyl-1-phosphate phosphatase.